We begin with the raw amino-acid sequence, 312 residues long: MKVAVLGAAGGIGQALALLLKLQLPAGSSLSLYDVAPVTPGVAKDLSHIPTDVVVEGFAGTDPSEALKGADIVLISAGVARKPGMTRADLFGVNAGIIRSLTEKVAEQCPKACVGIITNPVNAMVAIAAEVLKKAGVYDKRKLFGITTLDILRAETFIAELKGLDPTRVTIPVIGGHSGVTILPLLSQVQNVEWSSEEEIIALTHRIQNAGTEVVEAKAGGGSATLSMAQAAARFALALVKASQGAKVVECAYVEGDGKYARFFAQPVRLGTEGVEEYLTLGKLSAFEEKALNAMLETLQGDIKSGEDFING.

NAD(+) is bound by residues Gly-7–Gly-13 and Asp-34. 2 residues coordinate substrate: Arg-81 and Arg-87. Residues Asn-94 and Ile-117–Asn-119 contribute to the NAD(+) site. Asn-119 and Arg-153 together coordinate substrate. His-177 acts as the Proton acceptor in catalysis. Residue Met-228 participates in NAD(+) binding.

The protein belongs to the LDH/MDH superfamily. MDH type 1 family. In terms of assembly, homodimer.

It catalyses the reaction (S)-malate + NAD(+) = oxaloacetate + NADH + H(+). Functionally, catalyzes the reversible oxidation of malate to oxaloacetate. This is Malate dehydrogenase from Mannheimia succiniciproducens (strain KCTC 0769BP / MBEL55E).